Here is a 714-residue protein sequence, read N- to C-terminus: ATP-dependent DNA helicase DinG (714 aa).

The Helicase ATP-binding domain occupies 17–294; the sequence is ALQDQIPDFI…TCMEQFRPKT (278 aa). 54–61 is a binding site for ATP; sequence APTGVGKT. Positions 120, 194, 199, and 205 each coordinate [4Fe-4S] cluster. The DEAH box motif lies at 248–251; it reads DEGH. The Helicase C-terminal domain maps to 517 to 698; sequence HIAEMAAYFR…VFPIEQPAVP (182 aa).

The protein belongs to the helicase family. DinG subfamily. Type 1 sub-subfamily. It depends on [4Fe-4S] cluster as a cofactor.

It carries out the reaction Couples ATP hydrolysis with the unwinding of duplex DNA at the replication fork by translocating in the 5'-3' direction. This creates two antiparallel DNA single strands (ssDNA). The leading ssDNA polymer is the template for DNA polymerase III holoenzyme which synthesizes a continuous strand.. It catalyses the reaction ATP + H2O = ADP + phosphate + H(+). In terms of biological role, DNA-dependent ATPase and 5'-3' DNA helicase. Unwinds D-loops, R-loops, forked DNA and G-quadruplex DNA. This chain is ATP-dependent DNA helicase DinG, found in Salmonella paratyphi A (strain ATCC 9150 / SARB42).